The chain runs to 240 residues: Lectin (240 aa).

Mn(2+)-binding residues include E127 and D129. Ca(2+) contacts are provided by D129, Y131, N133, and D138. Residues D138 and H143 each coordinate Mn(2+).

Belongs to the leguminous lectin family. As to quaternary structure, heterotetramer of two alpha and two beta chains; disulfide bond linked.

Functionally, binds preferentially to oligosaccharides bearing the sequence Man-alpha-1-&gt;2 Man-alpha-1-&gt;6 Man-alpha-1-&gt;6Man found in early steps of glycoprotein processing in the endoplasmic reticulum. It binds weakly to highly processed oligosaccharide structures. The protein is Lectin of Leucomphalos mildbraedii (Bowringia mildbraedii).